The primary structure comprises 316 residues: Porphobilinogen deaminase (316 aa).

S-(dipyrrolylmethanemethyl)cysteine is present on Cys249.

It belongs to the HMBS family. As to quaternary structure, monomer. It depends on dipyrromethane as a cofactor.

The catalysed reaction is 4 porphobilinogen + H2O = hydroxymethylbilane + 4 NH4(+). The protein operates within porphyrin-containing compound metabolism; protoporphyrin-IX biosynthesis; coproporphyrinogen-III from 5-aminolevulinate: step 2/4. Tetrapolymerization of the monopyrrole PBG into the hydroxymethylbilane pre-uroporphyrinogen in several discrete steps. The protein is Porphobilinogen deaminase of Nitrobacter winogradskyi (strain ATCC 25391 / DSM 10237 / CIP 104748 / NCIMB 11846 / Nb-255).